We begin with the raw amino-acid sequence, 531 residues long: Probable rhamnogalacturonate lyase A (531 aa).

The signal sequence occupies residues 1-20 (MLSKTSLLSLLSLAAGVVNA). 2 disulfide bridges follow: Cys-50–Cys-93 and Cys-184–Cys-193.

Belongs to the polysaccharide lyase 4 family.

The protein localises to the secreted. The enzyme catalyses Endotype eliminative cleavage of L-alpha-rhamnopyranosyl-(1-&gt;4)-alpha-D-galactopyranosyluronic acid bonds of rhamnogalacturonan I domains in ramified hairy regions of pectin leaving L-rhamnopyranose at the reducing end and 4-deoxy-4,5-unsaturated D-galactopyranosyluronic acid at the non-reducing end.. Its function is as follows. Pectinolytic enzymes consist of four classes of enzymes: pectin lyase, polygalacturonase, pectin methylesterase and rhamnogalacturonase. Degrades the rhamnogalacturonan I (RG-I) backbone of pectin. The protein is Probable rhamnogalacturonate lyase A (rglA) of Aspergillus niger (strain ATCC MYA-4892 / CBS 513.88 / FGSC A1513).